The chain runs to 383 residues: S-adenosylmethionine synthase (383 aa).

An ATP-binding site is contributed by histidine 22. Aspartate 24 lines the Mg(2+) pocket. A K(+)-binding site is contributed by glutamate 50. L-methionine is bound by residues glutamate 63 and glutamine 99. Positions 99–109 are flexible loop; the sequence is QSLEINQAVLK. Residues 160 to 162, aspartate 235, 241 to 242, serine 258, and lysine 262 each bind ATP; these read DMK and RK. Aspartate 235 contacts L-methionine. An L-methionine-binding site is contributed by lysine 266.

It belongs to the AdoMet synthase family. Homotetramer; dimer of dimers. Requires Mg(2+) as cofactor. It depends on K(+) as a cofactor.

The protein resides in the cytoplasm. It carries out the reaction L-methionine + ATP + H2O = S-adenosyl-L-methionine + phosphate + diphosphate. Its pathway is amino-acid biosynthesis; S-adenosyl-L-methionine biosynthesis; S-adenosyl-L-methionine from L-methionine: step 1/1. Functionally, catalyzes the formation of S-adenosylmethionine (AdoMet) from methionine and ATP. The overall synthetic reaction is composed of two sequential steps, AdoMet formation and the subsequent tripolyphosphate hydrolysis which occurs prior to release of AdoMet from the enzyme. The polypeptide is S-adenosylmethionine synthase (Mycoplasma genitalium (strain ATCC 33530 / DSM 19775 / NCTC 10195 / G37) (Mycoplasmoides genitalium)).